An 88-amino-acid polypeptide reads, in one-letter code: Antitoxin HipB (88 aa).

Residues 17–71 form the HTH cro/C1-type domain; the sequence is MKLVRQQNGWTQSELAKKIGIKQATISNFENNPDNTTLTTFFKILQSLELSMTLC. The segment at residues 21–47 is a DNA-binding region (H-T-H motif); sequence RQQNGWTQSELAKKIGIKQATISNFEN.

Homodimer. Binds operator DNA sites in the absence of HipA, inducing a 70 degree bend in consecutive operators and deforming DNA between the operators so that HipB dimers bind on opposite faces of the DNA. Forms a HipA(2)HipB(2) heterotetramer which can interact with a single operator site on DNA, inducing a 70 degree bend. When 2 operators are present each HipB dimer contacts 1 HipA molecule, which are brought together by the DNA bend and dimerize, blocking the HipA active site and inactivating its toxic activity. HipA-HipB-induced bending also distorts the -35 and -10 boxes of the promoter and probably prevents sigma-factor binding, and additionally bound HipB and HipA block RNA polymerase access to the -35 box, thus repressing the operon. This complex also blocks the toxic activity of HipA. Mutations present in allele hipA7 (G22S and D291A) decrease the affinity of HipA for HipB. Degraded by Lon protease in vivo; half-life is 17 minutes in wild-type cells and over 200 minutes in a lon deletion strain. In vitro degradation by Lon is Mg(2+)-ATP-dependent.

Degraded by Lon protease; degradation is inhibited in a HipA-HipB complex and when bound to the operator consensus sequence dsDNA. Its function is as follows. Antitoxin component of a type II toxin-antitoxin (TA) system. Neutralizes the toxic effect of cognate toxin HipA. Also neutralizes the toxic effect of non-cognate toxin YjjJ. Binds to operator sites with the consensus sequence 5-'TATCCN(8)GGATA-3' to repress the hipBA operon promoter; binding of HipB(2) to DNA induces a 70 degree bend. This forces HipA dimerization, which blocks HipA's active site and thus its toxic action. May play a role in biofilm formation. In Escherichia coli (strain K12), this protein is Antitoxin HipB (hipB).